Consider the following 347-residue polypeptide: NADH-quinone oxidoreductase subunit H (347 aa).

A run of 8 helical transmembrane segments spans residues 25–45 (ILFM…VAAM), 95–115 (FMFT…FAII), 128–148 (IGIL…LFGG), 168–188 (ISYE…TGSF), 200–220 (GWYI…GVAV), 251–271 (FFIG…CLFF), 284–304 (FIPP…MFVL), and 324–344 (VCLP…LIFS).

This sequence belongs to the complex I subunit 1 family. As to quaternary structure, NDH-1 is composed of 14 different subunits. Subunits NuoA, H, J, K, L, M, N constitute the membrane sector of the complex.

It is found in the cell inner membrane. It carries out the reaction a quinone + NADH + 5 H(+)(in) = a quinol + NAD(+) + 4 H(+)(out). Its function is as follows. NDH-1 shuttles electrons from NADH, via FMN and iron-sulfur (Fe-S) centers, to quinones in the respiratory chain. The immediate electron acceptor for the enzyme in this species is believed to be ubiquinone. Couples the redox reaction to proton translocation (for every two electrons transferred, four hydrogen ions are translocated across the cytoplasmic membrane), and thus conserves the redox energy in a proton gradient. This subunit may bind ubiquinone. In Psychrobacter cryohalolentis (strain ATCC BAA-1226 / DSM 17306 / VKM B-2378 / K5), this protein is NADH-quinone oxidoreductase subunit H.